We begin with the raw amino-acid sequence, 228 residues long: Urease accessory protein UreF 1 (228 aa).

The protein belongs to the UreF family. In terms of assembly, ureD, UreF and UreG form a complex that acts as a GTP-hydrolysis-dependent molecular chaperone, activating the urease apoprotein by helping to assemble the nickel containing metallocenter of UreC. The UreE protein probably delivers the nickel.

It is found in the cytoplasm. In terms of biological role, required for maturation of urease via the functional incorporation of the urease nickel metallocenter. This Brucella anthropi (strain ATCC 49188 / DSM 6882 / CCUG 24695 / JCM 21032 / LMG 3331 / NBRC 15819 / NCTC 12168 / Alc 37) (Ochrobactrum anthropi) protein is Urease accessory protein UreF 1.